Reading from the N-terminus, the 582-residue chain is Solute carrier family 15 member 3 (582 aa).

The disordered stretch occupies residues 1–20 (MSALRAEQQPSRSGERQPLV). 4 consecutive transmembrane segments (helical) span residues 33 to 53 (TAAA…FGVT), 77 to 97 (LLFL…ADVY), 102 to 122 (LAIS…LTTI), and 155 to 175 (PYCA…ASSV). N-linked (GlcNAc...) asparagine glycosylation is present at Asn-178. Residues 201 to 221 (WFYWSINLGAILSLLVVAFIE) form a helical membrane-spanning segment. An N-linked (GlcNAc...) asparagine glycan is attached at Asn-223. 2 helical membrane passes run 232-252 (IIVG…PVFI) and 312-332 (FQVL…WMVY). A glycan (N-linked (GlcNAc...) asparagine) is linked at Asn-357. Helical transmembrane passes span 371–391 (IPEA…VPVK) and 409–429 (LQKM…AGVL). N-linked (GlcNAc...) asparagine glycosylation occurs at Asn-440. Transmembrane regions (helical) follow at residues 466–485 (YLLI…EFAY), 498–518 (GIFF…VALL), and 541–561 (LYFF…LWIA). Asn-575 is a glycosylation site (N-linked (GlcNAc...) asparagine).

It belongs to the major facilitator superfamily. Proton-dependent oligopeptide transporter (POT/PTR) (TC 2.A.17) family. As to expression, abundant expression in lung, spleen and thymus, and detected faintly in brain, liver, adrenal gland and heart at protein level.

Its subcellular location is the lysosome membrane. The protein resides in the endosome membrane. It carries out the reaction N-acetyl-D-muramoyl-L-alanyl-D-isoglutamine(out) + n H(+)(out) = N-acetyl-D-muramoyl-L-alanyl-D-isoglutamine(in) + n H(+)(in). The enzyme catalyses glycylglycylglycine(out) + n H(+)(out) = glycylglycylglycine(in) + n H(+)(in). The catalysed reaction is carnosine(out) + n H(+)(out) = carnosine(in) + n H(+)(in). It catalyses the reaction L-histidine(out) + n H(+)(out) = L-histidine(in) + n H(+)(in). Proton-coupled amino-acid transporter that transports free histidine and certain di- and tripeptides, and is involved in innate immune response. Also able to transport carnosine. Involved in the detection of microbial pathogens by toll-like receptors (TLRs) and NOD-like receptors (NLRs), probably by mediating transport of bacterial peptidoglycans across the endolysosomal membrane: catalyzes the transport of certain bacterial peptidoglycans, such as muramyl dipeptide (MDP), the NOD2 ligand. In Rattus norvegicus (Rat), this protein is Solute carrier family 15 member 3 (Slc15a3).